Consider the following 938-residue polypeptide: Myocardin (938 aa).

Residues 12-27 carry the MEF2C-binding motif; it reads IRRKFRSVLQLRLQQR. 3 RPEL repeats span residues 18–43, 62–87, and 106–131; these read SVLQ…PPLK, DSLR…QAST, and DDLN…PMDS. The interval 37 to 64 is disordered; that stretch reads GLIPPLKSPTEFHDPRKKLDSAKTEDSL. The segment covering 46–64 has biased composition (basic and acidic residues); it reads TEFHDPRKKLDSAKTEDSL. The interval 153-205 is HDAC5-binding; the sequence is FEDDSSRDGLSPDQARSEDPQGSGGSTPDIKSTEAPLAGPLDTIQDLTPGSES. 2 disordered regions span residues 155–282 and 339–381; these read DDSS…PPPM and NEQM…PLPP. The span at 210–221 shows a compositional bias: polar residues; the sequence is TASQLSNQSDSG. Basic residues predominate over residues 248–265; the sequence is NRHKKPKDPKPKVKKLKY. The segment covering 345–360 has biased composition (low complexity); it reads NPNSSSTPLNNTPLSP. Residues 361–372 show a composition bias toward polar residues; it reads VKNSLSGQTGVS. An SAP domain is found at 383 to 417; that stretch reads LDDLKVSELRQQLRIRGLPVSGTKTALVDRLRPFQ. A phosphoserine; by GSK3-beta mark is found at Ser457, Ser461, Ser465, and Ser469. The segment at 501 to 521 is disordered; that stretch reads ESLLSSLNGGSGPSEPDGLDS. Positions 522-566 form a coiled coil; it reads EKDKMLVEKQKVINQLTWKLRQEQRQVEELRMQLQKQKSGCNDQK. Residues 586–606 form a disordered region; sequence AAQQASGKGQGHSSDSPPPAC. Residues 588–600 show a composition bias toward polar residues; it reads QQASGKGQGHSSD. Phosphoserine; by GSK3-beta occurs at positions 627, 631, 635, and 639. Composition is skewed to polar residues over residues 667–694 and 701–713; these read GAQR…QSSD and SIPS…SSPT. Residues 667–734 are disordered; the sequence is GAQRENHGVS…DAVKQQMTRS (68 aa). The required for interaction with and ubiquitination by STUB1 stretch occupies residues 717–938; it reads ITQPPSYEDA…SPMDLHLQQW (222 aa). Residues Ser815, Ser862, and Ser869 each carry the phosphoserine; by MAPK1 and MAPK3 modification. Position 896 is a phosphothreonine; by MAPK1 and MAPK3 (Thr896).

As to quaternary structure, homodimer. Interacts with MLLT7/FOXO4. Interacts with SRF, its association does not depend on specific DNA sequences for ternary complex formation. Interacts (via C-terminal) with EP300 (via the CREB-binding domain). Interacts with HDAC4 and HDAC5. Interacts with MEF2C. Interacts (via C-terminus) with STUB1/CHIP. Interacts with PURB. Ubiquitinated; by STUB1/CHIP at the C-terminus, leading to its degradation by the proteasome. Phosphorylation by GSK3B is required for STUB1/CHIP-mediated ubiquitination. Post-translationally, phosphorylation negatively regulates transcriptional activity. Phosphorylated; by GSK3B. Abundantly expressed in the heart, aorta media and bladder, weakly expressed in the stomach, intestine and lung.

The protein resides in the nucleus. Functionally, smooth muscle cells (SM) and cardiac muscle cells-specific transcriptional factor which uses the canonical single or multiple CArG boxes DNA sequence. Acts as a cofactor of serum response factor (SRF) with the potential to modulate SRF-target genes. Plays a crucial role in cardiogenesis, urinary bladder development, and differentiation of the smooth muscle cell lineage (myogenesis). Positively regulates the transcription of genes involved in vascular smooth muscle contraction. The protein is Myocardin (Myocd) of Rattus norvegicus (Rat).